Consider the following 93-residue polypeptide: OMEGA-ectatommitoxin(02)-Rm1c (93 aa).

Residues 1-30 (MKDSYISIVIAYLMVTFILVSSMPIEGEKG) form the signal peptide. Intrachain disulfides connect Cys-39–Cys-52, Cys-47–Cys-68, and Cys-70–Cys-79. The EGF-like domain occupies 43–80 (YENYCFNGKCVHVVAQDEPGKPCYSCICDEFYIGERCG).

Belongs to the EGF domain peptide family. Expressed by the venom gland.

It is found in the secreted. Functionally, ant peptide with probable defensive activity which acts as a potent agonist of the mammalian epidermal growth factor receptor (EGFR). Mimics, both structurally and functionally, vertebrate epidermal growth factor (EGF) peptide hormones. In vivo, intraplantar injection in mice causes long-lasting (several days) hypersensitivity of the injected paw to both mechanical and thermal stimuli. Its long-lasting effect is unusual for venom toxins whose effects are usually immediate. One possible explanation is that it would reduce the duration of a nest attack, discourage future attacks, or enhance the actions of subsequent exposure to other pain-inducing venom peptides. This Rhytidoponera metallica (Australian green-headed ant) protein is OMEGA-ectatommitoxin(02)-Rm1c.